The primary structure comprises 187 residues: HTH-type transcriptional repressor Rv1474c (187 aa).

The region spanning 10-70 (AARRRQILDG…ALAREDTERM (61 aa)) is the HTH tetR-type domain. A DNA-binding region (H-T-H motif) is located at residues 33–52 (TVRRLEQAIGMSRGAIFHHF).

Homodimer.

With respect to regulation, binding to DNA is abolished in the presence of high concentration of iron. Specifically binds to tetracycline, which leads to a conformational change in the structure of the protein and inhibits the DNA binding activity. Its function is as follows. Represses the expression of the aconitase gene acn and its own expression, in an iron-responsive manner. Binds to the inverted repeat element present in the upstream region of acn (Rv1475c)-Rv1474c operon. Preferentially binds to major groove of the DNA. This Mycobacterium tuberculosis (strain ATCC 25618 / H37Rv) protein is HTH-type transcriptional repressor Rv1474c.